Reading from the N-terminus, the 375-residue chain is tRNA-specific 2-thiouridylase MnmA (375 aa).

ATP is bound by residues 13-20 and M39; that span reads AMSGGVDS. Residue C111 is the Nucleophile of the active site. An intrachain disulfide couples C111 to C208. G135 is a binding site for ATP. Residues 158–160 are interaction with tRNA; the sequence is KDQ. The Cysteine persulfide intermediate role is filled by C208. An interaction with tRNA region spans residues 313–314; it reads RY.

This sequence belongs to the MnmA/TRMU family.

It localises to the cytoplasm. The enzyme catalyses S-sulfanyl-L-cysteinyl-[protein] + uridine(34) in tRNA + AH2 + ATP = 2-thiouridine(34) in tRNA + L-cysteinyl-[protein] + A + AMP + diphosphate + H(+). Its function is as follows. Catalyzes the 2-thiolation of uridine at the wobble position (U34) of tRNA, leading to the formation of s(2)U34. The sequence is that of tRNA-specific 2-thiouridylase MnmA from Geotalea uraniireducens (strain Rf4) (Geobacter uraniireducens).